We begin with the raw amino-acid sequence, 339 residues long: D-erythrose-4-phosphate dehydrogenase (339 aa).

Residues 12 to 13 (RI) and arginine 81 contribute to the NAD(+) site. Substrate is bound by residues 154–156 (SCT), arginine 200, 213–214 (TK), and arginine 236. Cysteine 155 functions as the Nucleophile in the catalytic mechanism. Asparagine 318 contacts NAD(+).

It belongs to the glyceraldehyde-3-phosphate dehydrogenase family. Epd subfamily. As to quaternary structure, homotetramer.

The protein resides in the cytoplasm. It catalyses the reaction D-erythrose 4-phosphate + NAD(+) + H2O = 4-phospho-D-erythronate + NADH + 2 H(+). It functions in the pathway cofactor biosynthesis; pyridoxine 5'-phosphate biosynthesis; pyridoxine 5'-phosphate from D-erythrose 4-phosphate: step 1/5. In terms of biological role, catalyzes the NAD-dependent conversion of D-erythrose 4-phosphate to 4-phosphoerythronate. The sequence is that of D-erythrose-4-phosphate dehydrogenase from Escherichia fergusonii (strain ATCC 35469 / DSM 13698 / CCUG 18766 / IAM 14443 / JCM 21226 / LMG 7866 / NBRC 102419 / NCTC 12128 / CDC 0568-73).